Consider the following 287-residue polypeptide: Oxaloacetate decarboxylase (287 aa).

S50 lines the substrate pocket. Residue D88 participates in Mg(2+) binding. 2 residues coordinate substrate: R159 and H235.

It belongs to the isocitrate lyase family. Oxaloacetate decarboxylase subfamily. Homotetramer; dimer of dimers. The cofactor is Mg(2+).

The enzyme catalyses oxaloacetate + H(+) = pyruvate + CO2. Its function is as follows. Catalyzes the decarboxylation of oxaloacetate into pyruvate. Seems to play a role in maintaining cellular concentrations of bicarbonate and pyruvate. This is Oxaloacetate decarboxylase from Pseudomonas aeruginosa (strain LESB58).